The chain runs to 43 residues: Ferritin light chain (43 aa).

The region spanning 1–43 (MEAALLVEKNLNQALLDLHGLASARGDPHICDFLENHFLDEEV) is the Ferritin-like diiron domain.

Belongs to the ferritin family. As to quaternary structure, oligomer of 24 subunits. There are two types of subunits: L (light) chain and H (heavy) chain. The major chain can be light or heavy, depending on the species and tissue type. The functional molecule forms a roughly spherical shell with a diameter of 12 nm and contains a central cavity into which the insoluble mineral iron core is deposited. Interacts with NCOA4.

It is found in the cytoplasmic vesicle. The protein localises to the autophagosome. Its subcellular location is the cytoplasm. It localises to the autolysosome. Stores iron in a soluble, non-toxic, readily available form. Important for iron homeostasis. Iron is taken up in the ferrous form and deposited as ferric hydroxides after oxidation. Also plays a role in delivery of iron to cells. Mediates iron uptake in capsule cells of the developing kidney. Delivery to lysosomes by the cargo receptor NCOA4 for autophagic degradation and release or iron. The chain is Ferritin light chain (FTL) from Ovis aries (Sheep).